A 296-amino-acid chain; its full sequence is Small ribosomal subunit biogenesis GTPase RsgA (296 aa).

Positions 63 to 224 (RNQLVRPPVA…IADTPGFSSY (162 aa)) constitute a CP-type G domain. GTP contacts are provided by residues 112–115 (SKTD) and 167–175 (GQTGAGKST). The Zn(2+) site is built by Cys248, Cys253, His255, and Cys261.

Belongs to the TRAFAC class YlqF/YawG GTPase family. RsgA subfamily. In terms of assembly, monomer. Associates with 30S ribosomal subunit, binds 16S rRNA. It depends on Zn(2+) as a cofactor.

It is found in the cytoplasm. Its function is as follows. One of several proteins that assist in the late maturation steps of the functional core of the 30S ribosomal subunit. Helps release RbfA from mature subunits. May play a role in the assembly of ribosomal proteins into the subunit. Circularly permuted GTPase that catalyzes slow GTP hydrolysis, GTPase activity is stimulated by the 30S ribosomal subunit. In Limosilactobacillus reuteri (strain DSM 20016) (Lactobacillus reuteri), this protein is Small ribosomal subunit biogenesis GTPase RsgA.